The following is a 495-amino-acid chain: 2-carboxy-D-arabinitol-1-phosphatase (495 aa).

The segment covering 1–12 has biased composition (pro residues); it reads MLLFAPTPPPSP. The segment at 1–23 is disordered; the sequence is MLLFAPTPPPSPATAHRRPGGSA. A chloroplast-targeting transit peptide spans 1–50; the sequence is MLLFAPTPPPSPATAHRRPGGSAASCIRCSSVRELDRSPSRPPLPPLAEA. The active-site Tele-phosphohistidine intermediate is His58. The active-site Proton donor/acceptor is the Glu132.

It belongs to the phosphoglycerate mutase family.

It is found in the plastid. Its subcellular location is the chloroplast stroma. It carries out the reaction 2-carboxy-D-arabinitol 1-phosphate + H2O = 2-carboxy-D-arabinitol + phosphate. Inactivated by oxidized glutathione (GSSG) at pH 8.0. Phosphoglycerate mutase-like protein lacking PGM activity, but having 2-carboxy-D-arabinitol 1-phosphate (CA1P) phosphatase activity. Can dephosphorylate the closely related compounds 2-carboxy-D-arabinitol 1,5-bisphosphate (CABP) and 2-carboxy-D-ribitol-1,5-bisphosphate(CRBP), and 2,3-diphosphoglycerate. Prevents the accumulation of D-glycero-2,3-pentodiulose-1,5-bisphosphate (PDBP) a potent inhibitor of ribulose-1,5-bisphosphate carboxylase (RuBisCO). PDBP is produced during the oxidation of ribulose-1,5-bisphosphate, the substrate of RuBisCO. This Triticum aestivum (Wheat) protein is 2-carboxy-D-arabinitol-1-phosphatase.